The following is a 316-amino-acid chain: MIGRHKHCISLAEYSREEILEVLDLAVSMKEVLQRPIKKVPSLRGKSVVNLFFEASTRTRSSFEIAAKVLSADALNWTASASSVTKGETLVDTARNLEAMRPDVLVIRHSAGGAPRLVAEHVGCSVVSAGDGAHEHPSQGLLDCFTLREKLGTLEGKTIAIVGDISHSRVARSDLHAMTKLGARVRLCGPPTMIPAGIEALGATVRTQLREAVEGADAVVMLRIQHERIGDPLIPGTREYSKLWGLNAKKAAEWLRPECVILHPGPINRGVELSPEVADGPQSVILDQVQNGVAVRMAILYLLAGGNPADAGEAKA.

Carbamoyl phosphate-binding residues include Arg58 and Thr59. Lys86 serves as a coordination point for L-aspartate. Residues Arg108, His136, and Gln139 each contribute to the carbamoyl phosphate site. Positions 169 and 223 each coordinate L-aspartate. Carbamoyl phosphate-binding residues include Gly265 and Pro266.

It belongs to the aspartate/ornithine carbamoyltransferase superfamily. ATCase family. In terms of assembly, heterododecamer (2C3:3R2) of six catalytic PyrB chains organized as two trimers (C3), and six regulatory PyrI chains organized as three dimers (R2).

It catalyses the reaction carbamoyl phosphate + L-aspartate = N-carbamoyl-L-aspartate + phosphate + H(+). It participates in pyrimidine metabolism; UMP biosynthesis via de novo pathway; (S)-dihydroorotate from bicarbonate: step 2/3. Functionally, catalyzes the condensation of carbamoyl phosphate and aspartate to form carbamoyl aspartate and inorganic phosphate, the committed step in the de novo pyrimidine nucleotide biosynthesis pathway. The polypeptide is Aspartate carbamoyltransferase catalytic subunit (Anaeromyxobacter sp. (strain Fw109-5)).